The primary structure comprises 206 residues: Isochorismatase family protein 1A (206 aa).

The protein belongs to the isochorismatase family.

In Dictyostelium discoideum (Social amoeba), this protein is Isochorismatase family protein 1A.